A 454-amino-acid polypeptide reads, in one-letter code: MALNDETKVVVLLLPFPVQGHLNPFLQLSHLIAAQNIAVHYVGTVTHIRQAKLRYHNATSNIHFHAFEVPPYVSPPPNPEDDFPSHLIPSFEASAHLREPVGKLLQSLSSQAKRVVLINDSLMASVAQDAANFSNVERYCFQVFSALNTAGDFWEQMGKPPLADFHFPDIPSLQGCISAQFTDFLTAQNEFRKFNNGDIYNTSRVIEGPYVELLERFNGGKEVWALGPFTPLAVEKKDSIGFSHPCMEWLDKQEPSSVIYVSFGTTTALRDEQIQELATGLEQSKQKFIWVLRDADKGDIFDGSEAKRYELPEGFEERVEGMGLVVRDWAPQMEILSHSSTGGFMSHCGWNSCLESLTRGVPMATWAMHSDQPRNAVLVTDVLKVGLIVKDWEQRKSLVSASVIENAVRRLMETKEGDEIRKRAVKLKDEIHRSMDEGGVSRMEMASFIAHISR.

The protein belongs to the UDP-glycosyltransferase family. As to expression, high level in young seeds, less in older seeds and very low in roots.

The catalysed reaction is zeatin + UDP-alpha-D-xylose = O-beta-D-xylosylzeatin + UDP + H(+). Its function is as follows. Utilizes UDP-xylose as the sugar donor and catalyzes the formation of o-xylosylzeatin from zeatin. Does not act on UDP-glucose. This Phaseolus vulgaris (Kidney bean) protein is Zeatin O-xylosyltransferase.